The primary structure comprises 397 residues: Phosphoglycerate kinase (397 aa).

Substrate-binding positions include 25 to 27, Arg-41, 64 to 67, Arg-118, and Arg-151; these read DLN and HLGR. ATP is bound by residues Lys-202, Glu-324, and 350–353; that span reads GGDT.

The protein belongs to the phosphoglycerate kinase family. Monomer.

The protein localises to the cytoplasm. It catalyses the reaction (2R)-3-phosphoglycerate + ATP = (2R)-3-phospho-glyceroyl phosphate + ADP. Its pathway is carbohydrate degradation; glycolysis; pyruvate from D-glyceraldehyde 3-phosphate: step 2/5. The sequence is that of Phosphoglycerate kinase from Albidiferax ferrireducens (strain ATCC BAA-621 / DSM 15236 / T118) (Rhodoferax ferrireducens).